The following is a 370-amino-acid chain: 3-dehydroquinate synthase (370 aa).

Residues 112–116 (GVIGD), 136–137 (TT), Lys-149, Lys-158, and 176–179 (TLAT) each bind NAD(+). The Zn(2+) site is built by Glu-191, His-254, and His-276.

The protein belongs to the sugar phosphate cyclases superfamily. Dehydroquinate synthase family. Co(2+) is required as a cofactor. It depends on Zn(2+) as a cofactor. Requires NAD(+) as cofactor.

The protein localises to the cytoplasm. The enzyme catalyses 7-phospho-2-dehydro-3-deoxy-D-arabino-heptonate = 3-dehydroquinate + phosphate. It participates in metabolic intermediate biosynthesis; chorismate biosynthesis; chorismate from D-erythrose 4-phosphate and phosphoenolpyruvate: step 2/7. Functionally, catalyzes the conversion of 3-deoxy-D-arabino-heptulosonate 7-phosphate (DAHP) to dehydroquinate (DHQ). This is 3-dehydroquinate synthase from Xylella fastidiosa (strain M23).